The sequence spans 332 residues: Succinylglutamate desuccinylase (332 aa).

Positions 59, 62, and 151 each coordinate Zn(2+). The active site involves glutamate 215.

Belongs to the AspA/AstE family. Succinylglutamate desuccinylase subfamily. Requires Zn(2+) as cofactor.

It catalyses the reaction N-succinyl-L-glutamate + H2O = L-glutamate + succinate. The protein operates within amino-acid degradation; L-arginine degradation via AST pathway; L-glutamate and succinate from L-arginine: step 5/5. Transforms N(2)-succinylglutamate into succinate and glutamate. In Pseudomonas paraeruginosa (strain DSM 24068 / PA7) (Pseudomonas aeruginosa (strain PA7)), this protein is Succinylglutamate desuccinylase.